A 341-amino-acid chain; its full sequence is S-adenosylmethionine:tRNA ribosyltransferase-isomerase (341 aa).

This sequence belongs to the QueA family. Monomer.

It is found in the cytoplasm. The catalysed reaction is 7-aminomethyl-7-carbaguanosine(34) in tRNA + S-adenosyl-L-methionine = epoxyqueuosine(34) in tRNA + adenine + L-methionine + 2 H(+). It functions in the pathway tRNA modification; tRNA-queuosine biosynthesis. Transfers and isomerizes the ribose moiety from AdoMet to the 7-aminomethyl group of 7-deazaguanine (preQ1-tRNA) to give epoxyqueuosine (oQ-tRNA). This chain is S-adenosylmethionine:tRNA ribosyltransferase-isomerase, found in Staphylococcus aureus (strain USA300).